Consider the following 269-residue polypeptide: MSKVIKKRVETSPRPTASSDSLQTCAGVIEYAKSISKSNAKCIEYVTLNASQYANCSSISIKLTDSLSSQMTSTFIMLEGETKLYKNKSKQDRSDGYFLKIKVTAASPMLYQLLEAVYGNIKHKERIPNSLHSLSVETITEKTFKDESIFINKLNGAMVEYVSAGESSILRSIEGELESLSKRERQLAKAIITPIVFYRSGTETKITFALKKLIIDREVVANVIGLSGDSERVSMTENVEEDLARNLGLVDIDDEYDEDSDKEKPIFNV.

It belongs to the orthopoxvirus OPG079 family. Homoomultimer (Potential). Interacts with the small subunit of ribonucleotide reductase. Interacts with host FAM111A; this interaction protomtes OPG079 degradation through autophagy.

Its subcellular location is the host cytoplasm. In terms of biological role, plays an essential role in viral DNA replication. Binds to ssDNA with high affinity and localizes to cytoplasmic factories where nascent viral genomes accumulate. May disrupt loops, hairpins and other secondary structures present on ssDNA to reduce and eliminate pausing of viral DNA polymerase at specific sites during elongation. This Vaccinia virus (strain Copenhagen) (VACV) protein is Protein OPG079 (OPG079).